Here is a 382-residue protein sequence, read N- to C-terminus: 3-ketosteroid-9-alpha-monooxygenase, oxygenase component (382 aa).

Residues 20-122 (WHCLGLSRTF…TMEKHGQLFV (103 aa)) enclose the Rieske domain. Positions 61, 63, 80, and 83 each coordinate [2Fe-2S] cluster. 4 residues coordinate Fe cation: N169, H175, H180, and D298.

Homotrimer. The two-component system 3-ketosteroid-9-alpha-monooxygenase is composed of an oxygenase component KshA and a reductase component KshB. The cofactor is [2Fe-2S] cluster. Fe cation is required as a cofactor.

The enzyme catalyses androsta-1,4-diene-3,17-dione + 2 reduced [2Fe-2S]-[ferredoxin] + O2 + 2 H(+) = 9alpha-hydroxyandrosta-1,4-diene-3,17-dione + 2 oxidized [2Fe-2S]-[ferredoxin] + H2O. Functionally, in vitro, catalyzes the introduction of a 9alpha-hydroxyl moiety into the ring B of 3-ketosteroid substrates such as 1,4-androstadiene-3,17-dione (ADD), 4-androstene-3,17-dione (AD), 4-androstene-17beta-ol-3-one (testosterone), 4-pregnene-3,20-dione (progesterone), 23,24-bisnorcholesta-4-ene-22-oate and 23,24-bisnorcholesta-1,4-diene-22-oate. The polypeptide is 3-ketosteroid-9-alpha-monooxygenase, oxygenase component (Rhodococcus rhodochrous).